A 929-amino-acid chain; its full sequence is Chitin synthase 1 (929 aa).

Residues 1–12 (MAYRGAGGPGGG) show a composition bias toward gly residues. Disordered regions lie at residues 1 to 43 (MAYR…QEDE) and 114 to 156 (MGGH…GGGL). Composition is skewed to polar residues over residues 21–33 (QDLNPHSQYSNVQ) and 140–149 (SWVQRQNPNA). N560 carries N-linked (GlcNAc...) asparagine glycosylation. A run of 5 helical transmembrane segments spans residues 587–607 (FFFHVQLIYNILNVIFTWFSL), 643–663 (LFNAVLKYIYLAFVILQFILA), 678–698 (SFFVFSVIQAYILVLSGYLVV), 730–750 (VILLALIAIYGIYFIASFMYL), and 758–778 (SFPYYMLLMSTYINILMVYAF). N-linked (GlcNAc...) asparagine glycosylation is present at N801. 2 consecutive transmembrane segments (helical) span residues 857–877 (TMLVVLWLFSNCLLAVAITSD) and 897–917 (FLLFSTAFLSLIRFIGFLWFL).

This sequence belongs to the chitin synthase family. Class III subfamily.

The protein resides in the cell membrane. The catalysed reaction is [(1-&gt;4)-N-acetyl-beta-D-glucosaminyl](n) + UDP-N-acetyl-alpha-D-glucosamine = [(1-&gt;4)-N-acetyl-beta-D-glucosaminyl](n+1) + UDP + H(+). Polymerizes chitin, a structural polymer of the cell wall and septum, by transferring the sugar moiety of UDP-GlcNAc to the non-reducing end of the growing chitin polymer. CHS1 and CHS3 have compensatory functions in cell wall modifications in responses to stresses. Involved in appressoria formation and required for full virulence. The sequence is that of Chitin synthase 1 from Pyricularia oryzae (strain 70-15 / ATCC MYA-4617 / FGSC 8958) (Rice blast fungus).